The sequence spans 208 residues: LexA repressor (208 aa).

A DNA-binding region (H-T-H motif) is located at residues 28 to 48 (RAEIARQLGFRSANAAEEHLK). Active-site for autocatalytic cleavage activity residues include Ser-125 and Lys-162.

This sequence belongs to the peptidase S24 family. As to quaternary structure, homodimer.

The enzyme catalyses Hydrolysis of Ala-|-Gly bond in repressor LexA.. In terms of biological role, represses a number of genes involved in the response to DNA damage (SOS response), including recA and lexA. In the presence of single-stranded DNA, RecA interacts with LexA causing an autocatalytic cleavage which disrupts the DNA-binding part of LexA, leading to derepression of the SOS regulon and eventually DNA repair. The protein is LexA repressor of Alteromonas mediterranea (strain DSM 17117 / CIP 110805 / LMG 28347 / Deep ecotype).